Consider the following 222-residue polypeptide: PKHD-type hydroxylase cce_3668 (222 aa).

The Fe2OG dioxygenase domain occupies 78–175 (HIHSLRFSRY…RLVVVGWVHS (98 aa)). Positions 96, 98, and 156 each coordinate Fe cation. 2-oxoglutarate is bound at residue Arg166.

It depends on Fe(2+) as a cofactor. L-ascorbate is required as a cofactor.

This chain is PKHD-type hydroxylase cce_3668, found in Crocosphaera subtropica (strain ATCC 51142 / BH68) (Cyanothece sp. (strain ATCC 51142)).